Reading from the N-terminus, the 632-residue chain is Pentatricopeptide repeat-containing protein ELI1, chloroplastic (632 aa).

A chloroplast-targeting transit peptide spans M1–T19. 10 PPR repeats span residues D94–P128, N129–I159, D160–S194, T196–R221, D222–K256, D258–L292, N293–K323, D324–I354, T360–P395, and K396–D426. A type E motif region spans residues L431–E506. The tract at residues E497–F512 is required for function in RNA editing. A type E(+) motif region spans residues N507–K537. Residues S538–W632 form a type DYW motif region.

The protein belongs to the PPR family. PCMP-H subfamily. Requires Zn(2+) as cofactor.

It is found in the plastid. The protein resides in the chloroplast. In terms of biological role, plays a major role in single RNA editing events in chloroplasts. Acts as a site-recognition transacting factor involved in the edition of the site 5 of ndhB1 and ndhB2 (ndhB1-5 and ndhB2-5 sites corresponding to cytidine-830), which are plastid-encoded subunits of the NADH-plastoquinone oxidoreductase. May provide the catalytic activity for editing site conversion. This is Pentatricopeptide repeat-containing protein ELI1, chloroplastic from Arabidopsis thaliana (Mouse-ear cress).